Consider the following 573-residue polypeptide: Oxygen sensor histidine kinase response regulator DosT (573 aa).

2 GAF domains span residues 61–198 and 229–366; these read KLDA…GIAV and DPAM…ALAW. Heme is bound at residue H147. The Histidine kinase domain occupies 380 to 573; it reads ILTDRDRIAR…TLLRWSAPLR (194 aa). Phosphohistidine; by autocatalysis is present on H392.

Requires Mg(2+) as cofactor. The cofactor is heme.

It is found in the cytoplasm. In terms of biological role, interacts with the two-component regulatory system DevR/DevS (DosR/DosS) involved in onset of the dormancy response. Required for full induction of the DevR (DosR) regulon; required during early adaptation to anaerobiosis, to start induction of the DevR regulon. May act as a direct hypoxia/oxygen sensor. May be the secondary sensor for CO. Donates a phosphate group to DevR (DosR). This chain is Oxygen sensor histidine kinase response regulator DosT (dosT), found in Mycobacterium tuberculosis (strain CDC 1551 / Oshkosh).